A 247-amino-acid chain; its full sequence is ATP synthase subunit a, chloroplastic (247 aa).

The next 5 membrane-spanning stretches (helical) occupy residues 38-58 (QVLI…ILVV), 95-115 (VPFI…GALL), 134-154 (INTT…AGIS), 199-219 (LVVV…VMFL), and 220-240 (GLFT…AYIG).

The protein belongs to the ATPase A chain family. F-type ATPases have 2 components, CF(1) - the catalytic core - and CF(0) - the membrane proton channel. CF(1) has five subunits: alpha(3), beta(3), gamma(1), delta(1), epsilon(1). CF(0) has four main subunits: a, b, b' and c.

Its subcellular location is the plastid. It is found in the chloroplast thylakoid membrane. Functionally, key component of the proton channel; it plays a direct role in the translocation of protons across the membrane. In Lotus japonicus (Lotus corniculatus var. japonicus), this protein is ATP synthase subunit a, chloroplastic.